We begin with the raw amino-acid sequence, 236 residues long: Ribonuclease 3 (236 aa).

An RNase III domain is found at 8–130 (FRRLSQALDY…TFAAVSFDAD (123 aa)). Position 43 (Glu-43) interacts with Mg(2+). The active site involves Asp-47. Mg(2+)-binding residues include Asp-116 and Glu-119. Glu-119 is a catalytic residue. Positions 157–227 (DAKTRLQEAL…AEAALTLLEQ (71 aa)) constitute a DRBM domain.

This sequence belongs to the ribonuclease III family. Homodimer. Mg(2+) serves as cofactor.

Its subcellular location is the cytoplasm. The enzyme catalyses Endonucleolytic cleavage to 5'-phosphomonoester.. Digests double-stranded RNA. Involved in the processing of primary rRNA transcript to yield the immediate precursors to the large and small rRNAs (23S and 16S). Processes some mRNAs, and tRNAs when they are encoded in the rRNA operon. Processes pre-crRNA and tracrRNA of type II CRISPR loci if present in the organism. This chain is Ribonuclease 3, found in Chromobacterium violaceum (strain ATCC 12472 / DSM 30191 / JCM 1249 / CCUG 213 / NBRC 12614 / NCIMB 9131 / NCTC 9757 / MK).